Here is a 439-residue protein sequence, read N- to C-terminus: MSCSASGECKSTTATPVAPCDPDTCKKSTSTQPRKRFVGRANGSGPSASTSLVKNTTRRPRIINQIPDEILNDEELNEVIATTLPKNYNFEIHKSIWHIRKNNCKKIALQMPEGLLIYACIISDIIEQFCGPDISTVVMGDVTYGACCVDDFSAIALGCDFLIHYAHSCLVPIDSIKIKVLYVFVTIEIDTDHVVKSFKKNFETGTRMAMVGTIQFNPTIHTLKDRLLNEAGIVCTAPQIMPLSKGEVLGCTSANMSTEDYDMIMYIGDGRFHLESAMIHNPDIPAYRYDPYSRKLTREYFDQVEMVSVRKRAIQTAKNAKTIGLILGTLGRQGNTATLDMLQEKLNSKGYETHIVLLSEIFPAKLALFDGVDAWVQVACPRLSIDWGYAFPKPLLTPYEAMVMMDEDTLEGNDYPMDYYGKEGYGRGKQPRAKKEIAI.

The tract at residues 11 to 54 is disordered; it reads STTATPVAPCDPDTCKKSTSTQPRKRFVGRANGSGPSASTSLVK. Polar residues predominate over residues 44–54; the sequence is SGPSASTSLVK. [4Fe-4S] cluster contacts are provided by cysteine 147, cysteine 251, and cysteine 380.

It belongs to the DPH1/DPH2 family. DPH1 subfamily. As to quaternary structure, component of the 2-(3-amino-3-carboxypropyl)histidine synthase complex composed of DPH1, DPH2, DPH3 and a NADH-dependent reductase, predominantly CBR1. Requires [4Fe-4S] cluster as cofactor.

It localises to the cytoplasm. The enzyme catalyses L-histidyl-[translation elongation factor 2] + S-adenosyl-L-methionine = 2-[(3S)-amino-3-carboxypropyl]-L-histidyl-[translation elongation factor 2] + S-methyl-5'-thioadenosine + H(+). The protein operates within protein modification; peptidyl-diphthamide biosynthesis. Functionally, catalyzes the first step of diphthamide biosynthesis, a post-translational modification of histidine which occurs in elongation factor 2. DPH1 and DPH2 transfer a 3-amino-3-carboxypropyl (ACP) group from S-adenosyl-L-methionine (SAM) to a histidine residue, the reaction is assisted by a reduction system comprising DPH3 and a NADH-dependent reductase, predominantly CBR1. The polypeptide is 2-(3-amino-3-carboxypropyl)histidine synthase subunit 1 (DPH1) (Yarrowia lipolytica (strain CLIB 122 / E 150) (Yeast)).